A 340-amino-acid chain; its full sequence is MKFLDQAKVYIRSGNGGAGAISFRREKFIEFGGPDGGDGGRGGDVWALVVDGLNTLIDYRYQQHFRAKTGGHGKGRNMTGQKGDDIILKVPVGTQIFEEDNTTLICDLTEVGQRYRLAKGGNGGFGNLHFTTSTNRAPRRANPGLSGEERTLWLRLKLIADAGIIGLPNAGKSTFLASVTAAKPKVADYPFTTLYPHLGVARIDAREFVLADIPGLIEGAHEGVGIGDRFLGHVERCRVLFHLISAQEEDVVKAYQIVRNELKAYGNNLNDKTEIIALSQIDTLTIEERKAKQEFLQKVTGKSVMMFSAVSREGLENLLRAGAHIIEMARKKDVVREEQD.

Residues 1–159 (MKFLDQAKVY…RTLWLRLKLI (159 aa)) enclose the Obg domain. One can recognise an OBG-type G domain in the interval 160-327 (ADAGIIGLPN…LLRAGAHIIE (168 aa)). GTP contacts are provided by residues 166-173 (GLPNAGKS), 191-195 (FTTLY), 212-215 (DIPG), 279-282 (SQID), and 308-310 (SAV). Residues S173 and T193 each coordinate Mg(2+).

It belongs to the TRAFAC class OBG-HflX-like GTPase superfamily. OBG GTPase family. As to quaternary structure, monomer. It depends on Mg(2+) as a cofactor.

It localises to the cytoplasm. An essential GTPase which binds GTP, GDP and possibly (p)ppGpp with moderate affinity, with high nucleotide exchange rates and a fairly low GTP hydrolysis rate. Plays a role in control of the cell cycle, stress response, ribosome biogenesis and in those bacteria that undergo differentiation, in morphogenesis control. This chain is GTPase Obg, found in Bartonella henselae (strain ATCC 49882 / DSM 28221 / CCUG 30454 / Houston 1) (Rochalimaea henselae).